The following is an 801-amino-acid chain: Phosphatidylinositol 4-phosphate 5-kinase 1 (801 aa).

A signal peptide spans 1–21 (MPGLHVVSFLVVLLLQLRSSG). MORN repeat units follow at residues 41-63 (YVGS…DGAL), 64-86 (YDGE…SGAS), 87-109 (YEGD…DGSV), 110-132 (YKGS…NSDT), 133-155 (YEGF…DGNV), 156-178 (YIGR…NGDT), 182-201 (NWLN…SGAC), and 202-223 (YIGT…PGSK). Positions 366–797 (GHRSYYLMLN…RFISFLEKVF (432 aa)) constitute a PIPK domain.

As to expression, expressed in young seedlings, shoot and seeds, and at lower level in roots, stem and leaf.

It catalyses the reaction a 1,2-diacyl-sn-glycero-3-phospho-(1D-myo-inositol 4-phosphate) + ATP = a 1,2-diacyl-sn-glycero-3-phospho-(1D-myo-inositol-4,5-bisphosphate) + ADP + H(+). In terms of biological role, involved in flowering. May suppress floral initiation by modifying the expression of genes related to floral induction. The protein is Phosphatidylinositol 4-phosphate 5-kinase 1 (PIPK1) of Oryza sativa subsp. japonica (Rice).